The sequence spans 487 residues: Rhoptry apical surface protein 1 (487 aa).

The disordered stretch occupies residues 337–487 (EVAMSGRGGH…EEEQPLLFTQ (151 aa)). Composition is skewed to basic and acidic residues over residues 385-399 (DGIR…DRRA) and 454-475 (EKNE…GVEY).

Interacts with RASP2.

Its subcellular location is the cytoplasmic vesicle. It is found in the secretory vesicle. It localises to the rhoptry membrane. This chain is Rhoptry apical surface protein 1, found in Toxoplasma gondii (strain ATCC 50853 / GT1).